Reading from the N-terminus, the 445-residue chain is WD repeat domain phosphoinositide-interacting protein 2 (445 aa).

The stretch at 182-222 (AHDSPLAALAFDASGTKLATASEKGTVIRVFSIPEGQKLFE) is one WD 1 repeat. A L/FRRG motif motif is present at residues 223-226 (FRRG). WD repeat units lie at residues 228–267 (KRCV…EKPP) and 311–349 (GHKN…GGEC). The residue at position 395 (serine 395) is a Phosphoserine.

This sequence belongs to the WD repeat PROPPIN family. Interacts with TECPR1. Interacts with ATG16L1. Interacts with ATG5. Interacts with WIPI1. Interacts with WDR45. May interact with NUDC. Interacts with ULK1 and RB1CC1.

The protein resides in the preautophagosomal structure membrane. Its function is as follows. Component of the autophagy machinery that controls the major intracellular degradation process by which cytoplasmic materials are packaged into autophagosomes and delivered to lysosomes for degradation. Involved in an early step of the formation of preautophagosomal structures. Binds and is activated by phosphatidylinositol 3-phosphate (PtdIns3P) forming on membranes of the endoplasmic reticulum upon activation of the upstream ULK1 and PI3 kinases. Mediates ER-isolation membranes contacts by interacting with the ULK1:RB1CC1 complex and PtdIns3P. Once activated, WIPI2 recruits at phagophore assembly sites the ATG12-ATG5-ATG16L1 complex that directly controls the elongation of the nascent autophagosomal membrane. This chain is WD repeat domain phosphoinositide-interacting protein 2, found in Mus musculus (Mouse).